A 540-amino-acid polypeptide reads, in one-letter code: Chaperonin GroEL (540 aa).

ATP is bound by residues 29–32 (TLGP), 86–90 (DGTTT), G413, 476–478 (NAA), and D492.

It belongs to the chaperonin (HSP60) family. As to quaternary structure, forms a cylinder of 14 subunits composed of two heptameric rings stacked back-to-back. Interacts with the co-chaperonin GroES.

It localises to the cytoplasm. It carries out the reaction ATP + H2O + a folded polypeptide = ADP + phosphate + an unfolded polypeptide.. Its function is as follows. Together with its co-chaperonin GroES, plays an essential role in assisting protein folding. The GroEL-GroES system forms a nano-cage that allows encapsulation of the non-native substrate proteins and provides a physical environment optimized to promote and accelerate protein folding. In Streptococcus gordonii, this protein is Chaperonin GroEL.